A 591-amino-acid polypeptide reads, in one-letter code: Probable LRR receptor-like serine/threonine-protein kinase At1g69990 (591 aa).

An N-terminal signal peptide occupies residues 1–18 (MKTISIFFVIILMSSSHA). The Extracellular portion of the chain corresponds to 19-218 (EDDVLCLKGF…GKNLTIIVTA (200 aa)). An N-linked (GlcNAc...) asparagine glycan is attached at asparagine 46. 5 LRR repeats span residues 66 to 88 (RILS…LKLC), 90 to 111 (SLQS…QICS), 115 to 137 (YLVT…IVDC), 139 to 162 (FLNS…TRLN), and 163 to 185 (RLQR…LSHY). An N-linked (GlcNAc...) asparagine glycan is attached at asparagine 211. A helical membrane pass occupies residues 219–239 (GVIGAVGSLCVGFGMFWWFFI). Residues 240–591 (RDRRKMNNYG…LIFNKQEHLK (352 aa)) lie on the Cytoplasmic side of the membrane. Phosphothreonine is present on threonine 292. The 279-residue stretch at 295-573 (FDSGNIVVSS…KNLGDQHGFF (279 aa)) folds into the Protein kinase domain. ATP-binding positions include 301-309 (VVSSRSGVS) and lysine 323. At serine 378 the chain carries Phosphoserine. Threonine 389 carries the post-translational modification Phosphothreonine. Tyrosine 463 is subject to Phosphotyrosine. Serine 465 carries the post-translational modification Phosphoserine. Position 466 is a phosphothreonine (threonine 466). Serine 470 carries the post-translational modification Phosphoserine.

The protein belongs to the protein kinase superfamily. Ser/Thr protein kinase family.

The protein localises to the membrane. The enzyme catalyses L-seryl-[protein] + ATP = O-phospho-L-seryl-[protein] + ADP + H(+). It catalyses the reaction L-threonyl-[protein] + ATP = O-phospho-L-threonyl-[protein] + ADP + H(+). This is Probable LRR receptor-like serine/threonine-protein kinase At1g69990 from Arabidopsis thaliana (Mouse-ear cress).